Reading from the N-terminus, the 553-residue chain is Heterochromatin protein 1-binding protein 3 (553 aa).

Ala-2 bears the N-acetylalanine mark. Ser-6 is subject to Phosphoserine. Disordered regions lie at residues 29-134 (KLGE…KTIP) and 140-159 (SASQ…SPRP). The residue at position 51 (Thr-51) is a Phosphothreonine. Residues 60-71 (GEEEKPEPDISS) are compositionally biased toward acidic residues. Lys-64 participates in a covalent cross-link: Glycyl lysine isopeptide (Lys-Gly) (interchain with G-Cter in SUMO2). Thr-85 is subject to Phosphothreonine. Residues 94–127 (EQPKGEPENEEKEENKSSEETKKDEKDQSKEKEK) show a composition bias toward basic and acidic residues. Lys-97 participates in a covalent cross-link: Glycyl lysine isopeptide (Lys-Gly) (interchain with G-Cter in SUMO2). The segment covering 140-154 (SASQLARAQKQTPMA) has biased composition (polar residues). Residues Ser-142, Ser-155, and Ser-156 each carry the phosphoserine modification. Residues 157 to 232 (PRPKMDAILT…GASGSFVVVQ (76 aa)) enclose the H15 1 domain. An N6-acetyllysine modification is found at Lys-190. The segment at 230–255 (VVQKSRKTPQKSRNRKNRSSAVDPEP) is disordered. A compositionally biased stretch (basic residues) spans 233–247 (KSRKTPQKSRNRKNR). 2 positions are modified to phosphoserine: Ser-248 and Ser-249. Residues 255-259 (PQVKL) carry the PxVxL motif motif. H15 domains are found at residues 255–330 (PQVK…QLKK) and 337–413 (LGGS…QLCF). Lys-258 is covalently cross-linked (Glycyl lysine isopeptide (Lys-Gly) (interchain with G-Cter in SUMO2)). Positions 422–553 (LFPKKEPDDS…TMKKSFRVKK (132 aa)) are disordered. Residues 430–450 (DSRDEDEDEDESSEEDSEDEE) show a composition bias toward acidic residues. Phosphoserine is present on residues Ser-441, Ser-442, and Ser-446. Positions 489-510 (GKARPLPKKAPPKAKTPAKKTR) are enriched in basic residues. Positions 517–527 (KKPSGGSSKKP) are enriched in low complexity. Positions 543 to 553 (STMKKSFRVKK) are enriched in basic residues.

Interacts (via PxVxL motif) with CBX5 (via Trp-174).

The protein localises to the nucleus. Its subcellular location is the chromosome. Its function is as follows. Component of heterochromatin that maintains heterochromatin integrity during G1/S progression and regulates the duration of G1 phase to critically influence cell proliferative capacity. Mediates chromatin condensation during hypoxia, leading to increased tumor cell viability, radio-resistance, chemo-resistance and self-renewal. The sequence is that of Heterochromatin protein 1-binding protein 3 (HP1BP3) from Homo sapiens (Human).